The sequence spans 131 residues: Classical arabinogalactan protein 1 (131 aa).

The signal sequence occupies residues 1-22 (MAFSKSLVFVLLAALLISSAVA). The tract at residues 22–110 (AQSPAPAPSN…APGPAQGGAV (89 aa)) is disordered. Over residues 50–60 (APAPEVSPSPS) the composition is skewed to pro residues. Over residues 61–72 (PAAALTPESSAS) the composition is skewed to low complexity. The GPI-anchor amidated glycine moiety is linked to residue glycine 108. Positions 109 to 131 (AVSNKFASFGSVAVMLTAAVLVI) are cleaved as a propeptide — removed in mature form.

The protein belongs to the classical AGP family. In terms of processing, O-glycosylated on the hydroxyproline residues. Predominantly expressed in flowers and at a lower level in roots and leaves.

Its subcellular location is the cell membrane. Functionally, proteoglycan that seems to be implicated in diverse developmental roles such as differentiation, cell-cell recognition, embryogenesis and programmed cell death. In Arabidopsis thaliana (Mouse-ear cress), this protein is Classical arabinogalactan protein 1 (AGP1).